The primary structure comprises 176 residues: RNA polymerase sigma factor SigO (176 aa).

The Polymerase core binding signature appears at 30-43 (DARSLDELFKQFYK). The segment at residues 139 to 158 (MQEIADSLGESRQNISNIHK) is a DNA-binding region (H-T-H motif).

This sequence belongs to the sigma-70 factor family. Interacts with RNA polymerase.

In terms of biological role, sigma factors are initiation factors that promote the attachment of RNA polymerase to specific initiation sites and are then released. Together with its coactivator RsoA, positively regulates the expression of at least three operons, including oxdC-yvrL, sigO-rsoA and yvrJ. Required for the acid stress-dependent induction of the oxalate decarboxylase oxdC. This is RNA polymerase sigma factor SigO (sigO) from Bacillus subtilis (strain 168).